A 68-amino-acid polypeptide reads, in one-letter code: Bifunctional protein GlmU (68 aa).

UDP-N-acetyl-alpha-D-glucosamine contacts are provided by residues 9–12 and lysine 23; that span reads LAAG.

The protein in the N-terminal section; belongs to the N-acetylglucosamine-1-phosphate uridyltransferase family. This sequence in the C-terminal section; belongs to the transferase hexapeptide repeat family. Homotrimer. Requires Mg(2+) as cofactor.

It localises to the cytoplasm. The catalysed reaction is alpha-D-glucosamine 1-phosphate + acetyl-CoA = N-acetyl-alpha-D-glucosamine 1-phosphate + CoA + H(+). The enzyme catalyses N-acetyl-alpha-D-glucosamine 1-phosphate + UTP + H(+) = UDP-N-acetyl-alpha-D-glucosamine + diphosphate. It functions in the pathway nucleotide-sugar biosynthesis; UDP-N-acetyl-alpha-D-glucosamine biosynthesis; N-acetyl-alpha-D-glucosamine 1-phosphate from alpha-D-glucosamine 6-phosphate (route II): step 2/2. The protein operates within nucleotide-sugar biosynthesis; UDP-N-acetyl-alpha-D-glucosamine biosynthesis; UDP-N-acetyl-alpha-D-glucosamine from N-acetyl-alpha-D-glucosamine 1-phosphate: step 1/1. Its pathway is bacterial outer membrane biogenesis; LPS lipid A biosynthesis. Functionally, catalyzes the last two sequential reactions in the de novo biosynthetic pathway for UDP-N-acetylglucosamine (UDP-GlcNAc). The C-terminal domain catalyzes the transfer of acetyl group from acetyl coenzyme A to glucosamine-1-phosphate (GlcN-1-P) to produce N-acetylglucosamine-1-phosphate (GlcNAc-1-P), which is converted into UDP-GlcNAc by the transfer of uridine 5-monophosphate (from uridine 5-triphosphate), a reaction catalyzed by the N-terminal domain. In Priestia megaterium (Bacillus megaterium), this protein is Bifunctional protein GlmU (glmU).